A 275-amino-acid chain; its full sequence is ATP synthase subunit a (275 aa).

7 helical membrane-spanning segments follow: residues 46-66, 104-124, 135-155, 166-186, 204-224, 231-251, and 252-272; these read RLML…VIAM, FLPV…ASII, IGMP…VGIK, SIVV…IEFI, MLAG…FFFV, IFGV…LLVI, and FLQA…ALHA.

This sequence belongs to the ATPase A chain family. In terms of assembly, F-type ATPases have 2 components, CF(1) - the catalytic core - and CF(0) - the membrane proton channel. CF(1) has five subunits: alpha(3), beta(3), gamma(1), delta(1), epsilon(1). CF(0) has three main subunits: a(1), b(2) and c(9-12). The alpha and beta chains form an alternating ring which encloses part of the gamma chain. CF(1) is attached to CF(0) by a central stalk formed by the gamma and epsilon chains, while a peripheral stalk is formed by the delta and b chains.

It is found in the cell membrane. In terms of biological role, key component of the proton channel; it plays a direct role in the translocation of protons across the membrane. In Rhodococcus erythropolis (strain PR4 / NBRC 100887), this protein is ATP synthase subunit a.